The sequence spans 355 residues: Peptide chain release factor 1 (355 aa).

Position 232 is an N5-methylglutamine (Gln-232).

Belongs to the prokaryotic/mitochondrial release factor family. In terms of processing, methylated by PrmC. Methylation increases the termination efficiency of RF1.

It is found in the cytoplasm. Peptide chain release factor 1 directs the termination of translation in response to the peptide chain termination codons UAG and UAA. The protein is Peptide chain release factor 1 of Kineococcus radiotolerans (strain ATCC BAA-149 / DSM 14245 / SRS30216).